A 133-amino-acid polypeptide reads, in one-letter code: MANHDPISDMLTRIRNASQKRHENTRIPASRMSRSIAKVLQNEGFISQVSEEGEGVKTQLVLELKYSGKHRHPTIRSMKRVSKPGLRIYKNNRGLPKVLGGLGVAIISTSKGVMSDRDARKQGVGGEVLCYVY.

Belongs to the universal ribosomal protein uS8 family. In terms of assembly, part of the 30S ribosomal subunit. Contacts proteins S5 and S12.

Functionally, one of the primary rRNA binding proteins, it binds directly to 16S rRNA central domain where it helps coordinate assembly of the platform of the 30S subunit. This is Small ribosomal subunit protein uS8 from Prochlorococcus marinus (strain SARG / CCMP1375 / SS120).